The primary structure comprises 146 residues: Hemoglobin subunit beta (146 aa).

Valine 1 is modified (N-acetylvaline). The Globin domain occupies 2 to 146; the sequence is HLTPEEKALV…VANALAHKYH (145 aa). Lysine 59 is subject to N6-acetyllysine. Histidine 63 serves as a coordination point for heme b. At lysine 82 the chain carries N6-acetyllysine. Residue histidine 92 participates in heme b binding. Cysteine 93 is modified (S-nitrosocysteine). An N6-acetyllysine modification is found at lysine 144.

The protein belongs to the globin family. Heterotetramer of two alpha chains and two beta chains. In terms of tissue distribution, red blood cells.

Involved in oxygen transport from the lung to the various peripheral tissues. The protein is Hemoglobin subunit beta (HBB) of Trichechus inunguis (Amazon manatee).